The sequence spans 254 residues: Triosephosphate isomerase (254 aa).

Asparagine 9–lysine 11 serves as a coordination point for substrate. Histidine 96 (electrophile) is an active-site residue. The active-site Proton acceptor is the glutamate 169. Substrate-binding positions include glycine 175, serine 215, and glycine 236–glycine 237.

This sequence belongs to the triosephosphate isomerase family. Homodimer.

The protein localises to the cytoplasm. The enzyme catalyses D-glyceraldehyde 3-phosphate = dihydroxyacetone phosphate. It functions in the pathway carbohydrate biosynthesis; gluconeogenesis. It participates in carbohydrate degradation; glycolysis; D-glyceraldehyde 3-phosphate from glycerone phosphate: step 1/1. In terms of biological role, involved in the gluconeogenesis. Catalyzes stereospecifically the conversion of dihydroxyacetone phosphate (DHAP) to D-glyceraldehyde-3-phosphate (G3P). The sequence is that of Triosephosphate isomerase from Borrelia duttonii (strain Ly).